Consider the following 247-residue polypeptide: MKNTELEQLINEKLNSAAISDYAPNGLQVEGKETVQKIVTGVTASQALLDEAVRLGADAVIVHHGYFWKGESPVIRGMKRNRLKTLLANDINLYGWHLPLDAHPELGNNAQLAALLGITVMGEIEPLVPWGELTMPVPGLELASWIEARLGRKPLWCGDTGPEVVQRVAWCTGGGQSFIDSAARFGVDAFITGEVSEQTIHSAREQGLHFYAAGHHATERGGIRALSEWLNENTDLDVTFIDIPNPA.

A divalent metal cation-binding residues include histidine 63, histidine 64, aspartate 101, histidine 215, and glutamate 219.

This sequence belongs to the GTP cyclohydrolase I type 2/NIF3 family. Toroid-shaped homohexamer. In the hexamer, 3 dimers assemble to form a ring-like structure surrounding a central hole.

Provides significant protection from radiation damage and may be involved in the degradation of radiation-damaged nucleotides. This Escherichia coli O157:H7 protein is GTP cyclohydrolase 1 type 2 homolog (ybgI).